The chain runs to 336 residues: Flap endonuclease 1 (336 aa).

An N-domain region spans residues 1-98 (MGADIGDLFE…AEIEERKKRR (98 aa)). 7 residues coordinate Mg(2+): Asp-27, Asp-80, Glu-151, Glu-153, Asp-172, Asp-174, and Asp-235. Residues 115–256 (DAKKYAQAAG…KALNYIKTYG (142 aa)) are I-domain. The interval 328-336 (TQATLERWF) is interaction with PCNA.

The protein belongs to the XPG/RAD2 endonuclease family. FEN1 subfamily. Interacts with PCNA. PCNA stimulates the nuclease activity without altering cleavage specificity. It depends on Mg(2+) as a cofactor.

Its function is as follows. Structure-specific nuclease with 5'-flap endonuclease and 5'-3' exonuclease activities involved in DNA replication and repair. During DNA replication, cleaves the 5'-overhanging flap structure that is generated by displacement synthesis when DNA polymerase encounters the 5'-end of a downstream Okazaki fragment. Binds the unpaired 3'-DNA end and kinks the DNA to facilitate 5' cleavage specificity. Cleaves one nucleotide into the double-stranded DNA from the junction in flap DNA, leaving a nick for ligation. Also involved in the base excision repair (BER) pathway. Acts as a genome stabilization factor that prevents flaps from equilibrating into structures that lead to duplications and deletions. Also possesses 5'-3' exonuclease activity on nicked or gapped double-stranded DNA. The protein is Flap endonuclease 1 of Archaeoglobus fulgidus (strain ATCC 49558 / DSM 4304 / JCM 9628 / NBRC 100126 / VC-16).